A 119-amino-acid polypeptide reads, in one-letter code: Ribosome-binding factor A (119 aa).

The protein belongs to the RbfA family. Monomer. Binds 30S ribosomal subunits, but not 50S ribosomal subunits or 70S ribosomes.

The protein resides in the cytoplasm. One of several proteins that assist in the late maturation steps of the functional core of the 30S ribosomal subunit. Associates with free 30S ribosomal subunits (but not with 30S subunits that are part of 70S ribosomes or polysomes). Required for efficient processing of 16S rRNA. May interact with the 5'-terminal helix region of 16S rRNA. The chain is Ribosome-binding factor A from Limosilactobacillus reuteri (strain DSM 20016) (Lactobacillus reuteri).